Consider the following 146-residue polypeptide: Anti-sigma F factor (146 aa).

Belongs to the anti-sigma-factor family.

The catalysed reaction is L-seryl-[protein] + ATP = O-phospho-L-seryl-[protein] + ADP + H(+). It catalyses the reaction L-threonyl-[protein] + ATP = O-phospho-L-threonyl-[protein] + ADP + H(+). Functionally, binds to sigma F and blocks its ability to form an RNA polymerase holoenzyme (E-sigma F). Phosphorylates SpoIIAA on a serine residue. This phosphorylation may enable SpoIIAA to act as an anti-anti-sigma factor that counteracts SpoIIAB and thus releases sigma F from inhibition. This Anoxybacillus flavithermus (strain DSM 21510 / WK1) protein is Anti-sigma F factor.